The following is a 115-amino-acid chain: NAD(P)H-quinone oxidoreductase subunit M, organellar chromatophore (115 aa).

The protein belongs to the complex I NdhM subunit family. As to quaternary structure, NDH-1 can be composed of about 15 different subunits; different subcomplexes with different compositions have been identified which probably have different functions.

The protein localises to the plastid. It is found in the organellar chromatophore thylakoid membrane. It carries out the reaction a plastoquinone + NADH + (n+1) H(+)(in) = a plastoquinol + NAD(+) + n H(+)(out). The enzyme catalyses a plastoquinone + NADPH + (n+1) H(+)(in) = a plastoquinol + NADP(+) + n H(+)(out). Its function is as follows. NDH-1 shuttles electrons from an unknown electron donor, via FMN and iron-sulfur (Fe-S) centers, to quinones in the respiratory and/or the photosynthetic chain. The immediate electron acceptor for the enzyme in this species is believed to be plastoquinone. Couples the redox reaction to proton translocation, and thus conserves the redox energy in a proton gradient. This Paulinella chromatophora protein is NAD(P)H-quinone oxidoreductase subunit M, organellar chromatophore.